The chain runs to 627 residues: Chaperone protein DnaK (627 aa).

Threonine 197 is modified (phosphothreonine; by autocatalysis). Positions 598 to 611 (AYAKEQGGQQGAAD) are enriched in low complexity. The tract at residues 598–627 (AYAKEQGGQQGAADAGKKADDDDVIDAEVE) is disordered. Residues 618–627 (DDDVIDAEVE) are compositionally biased toward acidic residues.

The protein belongs to the heat shock protein 70 family.

Functionally, acts as a chaperone. This chain is Chaperone protein DnaK, found in Sulfurovum sp. (strain NBC37-1).